A 397-amino-acid polypeptide reads, in one-letter code: tRNA-specific 2-thiouridylase MnmA (397 aa).

Residues 19–26 (AMSGGVDS) and Leu45 each bind ATP. Residue Cys113 is the Nucleophile of the active site. A disulfide bridge links Cys113 with Cys210. Position 137 (Gly137) interacts with ATP. The segment at 160–162 (RDQ) is interaction with tRNA. The Cysteine persulfide intermediate role is filled by Cys210.

Belongs to the MnmA/TRMU family.

It localises to the cytoplasm. The enzyme catalyses S-sulfanyl-L-cysteinyl-[protein] + uridine(34) in tRNA + AH2 + ATP = 2-thiouridine(34) in tRNA + L-cysteinyl-[protein] + A + AMP + diphosphate + H(+). Its function is as follows. Catalyzes the 2-thiolation of uridine at the wobble position (U34) of tRNA, leading to the formation of s(2)U34. The chain is tRNA-specific 2-thiouridylase MnmA from Rhodopseudomonas palustris (strain ATCC BAA-98 / CGA009).